Here is a 455-residue protein sequence, read N- to C-terminus: Bifunctional protein GlmU (455 aa).

The tract at residues 1–226 is pyrophosphorylase; that stretch reads MGLSVVILAA…EFEILGVNDR (226 aa). Residues 8–11, Lys-22, Gln-73, 78–79, 99–101, Gly-136, Glu-151, Asn-166, and Asn-224 each bind UDP-N-acetyl-alpha-D-glucosamine; these read LAAG, GT, and YGD. Asp-101 serves as a coordination point for Mg(2+). A Mg(2+)-binding site is contributed by Asn-224. Positions 227-247 are linker; that stretch reads TQLASLERVWQRNVAEKIMAK. The tract at residues 248–455 is N-acetyltransferase; the sequence is GVSIADPNRF…WQRPVKKTDK (208 aa). UDP-N-acetyl-alpha-D-glucosamine contacts are provided by Arg-330 and Lys-348. The Proton acceptor role is filled by His-360. Tyr-363 and Asn-374 together coordinate UDP-N-acetyl-alpha-D-glucosamine. Acetyl-CoA contacts are provided by residues Ala-377, 383–384, Ser-402, Ala-420, and Arg-437; that span reads NY.

The protein in the N-terminal section; belongs to the N-acetylglucosamine-1-phosphate uridyltransferase family. In the C-terminal section; belongs to the transferase hexapeptide repeat family. Homotrimer. Requires Mg(2+) as cofactor.

Its subcellular location is the cytoplasm. It carries out the reaction alpha-D-glucosamine 1-phosphate + acetyl-CoA = N-acetyl-alpha-D-glucosamine 1-phosphate + CoA + H(+). It catalyses the reaction N-acetyl-alpha-D-glucosamine 1-phosphate + UTP + H(+) = UDP-N-acetyl-alpha-D-glucosamine + diphosphate. It functions in the pathway nucleotide-sugar biosynthesis; UDP-N-acetyl-alpha-D-glucosamine biosynthesis; N-acetyl-alpha-D-glucosamine 1-phosphate from alpha-D-glucosamine 6-phosphate (route II): step 2/2. Its pathway is nucleotide-sugar biosynthesis; UDP-N-acetyl-alpha-D-glucosamine biosynthesis; UDP-N-acetyl-alpha-D-glucosamine from N-acetyl-alpha-D-glucosamine 1-phosphate: step 1/1. It participates in bacterial outer membrane biogenesis; LPS lipid A biosynthesis. In terms of biological role, catalyzes the last two sequential reactions in the de novo biosynthetic pathway for UDP-N-acetylglucosamine (UDP-GlcNAc). The C-terminal domain catalyzes the transfer of acetyl group from acetyl coenzyme A to glucosamine-1-phosphate (GlcN-1-P) to produce N-acetylglucosamine-1-phosphate (GlcNAc-1-P), which is converted into UDP-GlcNAc by the transfer of uridine 5-monophosphate (from uridine 5-triphosphate), a reaction catalyzed by the N-terminal domain. The protein is Bifunctional protein GlmU of Francisella tularensis subsp. novicida (strain U112).